The following is a 187-amino-acid chain: Phospholipase A2-gamma (187 aa).

A signal peptide spans 1–25 (MITGLALSRVAFGLTAFLLLAVVSS). Disulfide bonds link cysteine 29–cysteine 56, cysteine 33–cysteine 62, cysteine 38–cysteine 115, cysteine 49–cysteine 69, cysteine 68–cysteine 93, and cysteine 75–cysteine 86. Tyrosine 48, glycine 50, and tyrosine 53 together coordinate Ca(2+). Histidine 72 is a catalytic residue. Aspartate 73 is a Ca(2+) binding site.

The protein belongs to the phospholipase A2 family. Ca(2+) serves as cofactor. In terms of tissue distribution, strongly expressed in mature flowers but weakly expressed in other tissues. Detected in buds, open flowers and in pollen.

Its subcellular location is the secreted. The protein localises to the golgi apparatus. It localises to the trans-Golgi network. The protein resides in the endoplasmic reticulum. It carries out the reaction a 1,2-diacyl-sn-glycero-3-phosphocholine + H2O = a 1-acyl-sn-glycero-3-phosphocholine + a fatty acid + H(+). Functionally, PA2 catalyzes the calcium-dependent hydrolysis of the 2-acyl groups in 3-sn-phosphoglycerides. Releases lysophospholipids (LPLs) and free fatty acids (FFAs) from membrane phospholipids in response to hormones and other external stimuli. Plays a role in pollen development and germination and tube growth. The chain is Phospholipase A2-gamma (PLA2-GAMMA) from Arabidopsis thaliana (Mouse-ear cress).